The primary structure comprises 429 residues: C4-dicarboxylate transport protein (429 aa).

8 consecutive transmembrane segments (helical) span residues 3–23, 44–64, 76–96, 142–162, 184–204, 222–242, 326–346, and 352–372; these read LTIFKSLYFQVLTAITLGVLL, LIKMIIAPVIFCTVVTGIAGM, IALLYFEIVSTIALLIGLLIV, IGAFASGNILQVLLFAVLFGF, VIFGIINMIMRLAPLGAFGAM, LIACFYLTCILFVVVVLGSIA, VIHQVTLLVVLLLSSKGAAGV, and IVLAATISAVGHLPLAGLALI.

Belongs to the dicarboxylate/amino acid:cation symporter (DAACS) (TC 2.A.23) family.

The protein localises to the cell inner membrane. Functionally, responsible for the transport of dicarboxylates such as succinate, fumarate, and malate from the periplasm across the membrane. In Serratia proteamaculans (strain 568), this protein is C4-dicarboxylate transport protein.